We begin with the raw amino-acid sequence, 332 residues long: Ketol-acid reductoisomerase (NADP(+)) (332 aa).

The KARI N-terminal Rossmann domain occupies 2-182 (AKVYHDTEVS…GATRAGVLET (181 aa)). NADP(+)-binding positions include 25-28 (YGSQ), Arg-48, Ser-53, and 83-86 (DTEQ). Residue His-108 is part of the active site. Gly-134 is an NADP(+) binding site. Residues 183-328 (TFKEETETDL…KVLREMMPWL (146 aa)) form the KARI C-terminal knotted domain. Residues Asp-191, Glu-195, Glu-227, and Glu-231 each contribute to the Mg(2+) site. Ser-252 is a binding site for substrate.

It belongs to the ketol-acid reductoisomerase family. Requires Mg(2+) as cofactor.

The enzyme catalyses (2R)-2,3-dihydroxy-3-methylbutanoate + NADP(+) = (2S)-2-acetolactate + NADPH + H(+). The catalysed reaction is (2R,3R)-2,3-dihydroxy-3-methylpentanoate + NADP(+) = (S)-2-ethyl-2-hydroxy-3-oxobutanoate + NADPH + H(+). It participates in amino-acid biosynthesis; L-isoleucine biosynthesis; L-isoleucine from 2-oxobutanoate: step 2/4. It functions in the pathway amino-acid biosynthesis; L-valine biosynthesis; L-valine from pyruvate: step 2/4. Involved in the biosynthesis of branched-chain amino acids (BCAA). Catalyzes an alkyl-migration followed by a ketol-acid reduction of (S)-2-acetolactate (S2AL) to yield (R)-2,3-dihydroxy-isovalerate. In the isomerase reaction, S2AL is rearranged via a Mg-dependent methyl migration to produce 3-hydroxy-3-methyl-2-ketobutyrate (HMKB). In the reductase reaction, this 2-ketoacid undergoes a metal-dependent reduction by NADPH to yield (R)-2,3-dihydroxy-isovalerate. The chain is Ketol-acid reductoisomerase (NADP(+)) from Dictyoglomus turgidum (strain DSM 6724 / Z-1310).